Consider the following 266-residue polypeptide: Diphthine synthase (266 aa).

S-adenosyl-L-methionine contacts are provided by residues Leu9, Asp84, Val87, 112–113 (SI), Leu169, Ala210, and His235.

This sequence belongs to the diphthine synthase family. In terms of assembly, homodimer.

It carries out the reaction 2-[(3S)-amino-3-carboxypropyl]-L-histidyl-[translation elongation factor 2] + 3 S-adenosyl-L-methionine = diphthine-[translation elongation factor 2] + 3 S-adenosyl-L-homocysteine + 3 H(+). It functions in the pathway protein modification; peptidyl-diphthamide biosynthesis. Its function is as follows. S-adenosyl-L-methionine-dependent methyltransferase that catalyzes the trimethylation of the amino group of the modified target histidine residue in translation elongation factor 2 (EF-2), to form an intermediate called diphthine. The three successive methylation reactions represent the second step of diphthamide biosynthesis. The sequence is that of Diphthine synthase from Methanosarcina acetivorans (strain ATCC 35395 / DSM 2834 / JCM 12185 / C2A).